A 622-amino-acid chain; its full sequence is 4-hydroxyphenylalkanoate adenylyltransferase (622 aa).

The protein belongs to the ATP-dependent AMP-binding enzyme family.

It catalyses the reaction 17-(4-hydroxyphenyl)heptadecanoate + holo-[(phenol)carboxyphthiodiolenone synthase] + ATP = 17-(4-hydroxyphenyl)heptadecanoyl-[(phenol)carboxyphthiodiolenone synthase] + AMP + diphosphate. The enzyme catalyses 19-(4-hydroxyphenyl)nonadecanoate + holo-[(phenol)carboxyphthiodiolenone synthase] + ATP = 19-(4-hydroxyphenyl)nonadecanoyl-[(phenol)carboxyphthiodiolenone synthase] + AMP + diphosphate. Its pathway is lipid metabolism; fatty acid biosynthesis. Functionally, catalyzes the activation of long-chain fatty acids as acyl-adenylates (acyl-AMP), which are then transferred to the multifunctional polyketide synthase PpsA for further chain extension. Involved in the biosynthesis of phenolphthiocerol, which is an important intermediate in the biosynthesis of phenolic glycolipid (PGL), also called mycosid B. This Mycobacterium marinum (strain ATCC BAA-535 / M) protein is 4-hydroxyphenylalkanoate adenylyltransferase (fadD29).